The primary structure comprises 309 residues: Malate dehydrogenase (309 aa).

Residues 10–15 (GAGNVG) and Asp-34 each bind NAD(+). Positions 83 and 89 each coordinate substrate. NAD(+) is bound by residues Asn-96 and 119–121 (VTN). The substrate site is built by Asn-121 and Arg-152. The active-site Proton acceptor is His-176.

It belongs to the LDH/MDH superfamily. MDH type 3 family.

The catalysed reaction is (S)-malate + NAD(+) = oxaloacetate + NADH + H(+). In terms of biological role, catalyzes the reversible oxidation of malate to oxaloacetate. This Desulforudis audaxviator (strain MP104C) protein is Malate dehydrogenase.